A 344-amino-acid polypeptide reads, in one-letter code: Oxygen sensor histidine kinase NreB (344 aa).

Residues cysteine 58, cysteine 61, cysteine 73, and cysteine 76 each coordinate [4Fe-4S] cluster. The region spanning 147-344 is the Histidine kinase domain; it reads ENERKRISRE…GTIITLDIPI (198 aa). Residue histidine 158 is modified to Phosphohistidine; by autocatalysis.

[4Fe-4S] cluster is required as a cofactor. Autophosphorylated.

The protein resides in the cytoplasm. The catalysed reaction is ATP + protein L-histidine = ADP + protein N-phospho-L-histidine.. In terms of biological role, member of the two-component regulatory system NreB/NreC involved in the control of dissimilatory nitrate/nitrite reduction in response to oxygen. NreB functions as a direct oxygen sensor histidine kinase which is autophosphorylated, in the absence of oxygen, probably at the conserved histidine residue, and transfers its phosphate group probably to a conserved aspartate residue of NreC. NreB/NreC activates the expression of the nitrate (narGHJI) and nitrite (nir) reductase operons, as well as the putative nitrate transporter gene narT. This Staphylococcus epidermidis (strain ATCC 12228 / FDA PCI 1200) protein is Oxygen sensor histidine kinase NreB (nreB).